Here is a 2030-residue protein sequence, read N- to C-terminus: Dedicator of cytokinesis protein 3 (2030 aa).

Positions 6 to 67 (EEEKYGVVIC…PANYIHLKKA (62 aa)) constitute an SH3 domain. Residues 421 to 599 (RNDLYLTLEK…ESFFISTQLS (179 aa)) enclose the C2 DOCK-type domain. Residues 1228–1635 (KSEINKEEMY…LYHEFPGLDK (408 aa)) enclose the DOCKER domain. Disordered stretches follow at residues 1641–1662 (SGTS…PESI), 1734–1771 (SSSQ…SLPD), 1849–1927 (DTPP…ADED), and 1951–2030 (QPCR…RGEQ). Ser-1658 bears the Phosphoserine mark. A compositionally biased stretch (low complexity) spans 1734–1754 (SSSQASPSSSSLSSTHSAPSQ). A compositionally biased stretch (polar residues) spans 1755–1765 (MITSAPSSARG). A compositionally biased stretch (low complexity) spans 1880-1902 (GSNSTLSGSASSGVSSLSESNFG). The segment covering 1967–1977 (PMDPPALPPKP) has biased composition (pro residues). The short motif at 1970–1976 (PPALPPK) is the SH3-binding element. Composition is skewed to basic and acidic residues over residues 1984–2001 (ALEH…ERPR) and 2014–2030 (AKEE…RGEQ).

Belongs to the DOCK family. Interacts with presenilin proteins PSEN1 and PSEN2. Interacts with CRK. In terms of tissue distribution, in normal brains, it is localized in the neuropil, and occasionally in the pyramidal cells, while in Alzheimer disease brains, it is associated with neurofibrillary tangles.

The protein resides in the cytoplasm. In terms of biological role, potential guanine nucleotide exchange factor (GEF). GEF proteins activate some small GTPases by exchanging bound GDP for free GTP. Its interaction with presenilin proteins as well as its ability to stimulate Tau/MAPT phosphorylation suggest that it may be involved in Alzheimer disease. Ectopic expression in nerve cells decreases the secretion of amyloid-beta APBA1 protein and lowers the rate of cell-substratum adhesion, suggesting that it may affect the function of some small GTPase involved in the regulation of actin cytoskeleton or cell adhesion receptors. The protein is Dedicator of cytokinesis protein 3 (DOCK3) of Homo sapiens (Human).